Reading from the N-terminus, the 285-residue chain is Release factor glutamine methyltransferase (285 aa).

S-adenosyl-L-methionine is bound by residues Gly-124–Gly-128, Asp-147, and Asn-190. Asn-190–Tyr-193 provides a ligand contact to substrate.

It belongs to the protein N5-glutamine methyltransferase family. PrmC subfamily.

It catalyses the reaction L-glutaminyl-[peptide chain release factor] + S-adenosyl-L-methionine = N(5)-methyl-L-glutaminyl-[peptide chain release factor] + S-adenosyl-L-homocysteine + H(+). Functionally, methylates the class 1 translation termination release factors RF1/PrfA and RF2/PrfB on the glutamine residue of the universally conserved GGQ motif. The chain is Release factor glutamine methyltransferase from Flavobacterium psychrophilum (strain ATCC 49511 / DSM 21280 / CIP 103535 / JIP02/86).